The primary structure comprises 491 residues: F-box/LRR-repeat protein 7 (491 aa).

The disordered stretch occupies residues 1-79; that stretch reads MGANNGKQYG…GRGSSTSSSS (79 aa). Positions 10-26 are enriched in low complexity; the sequence is GSEGKGSSSISSDVSSS. Residues 27-55 are compositionally biased toward polar residues; sequence TDHTPTKAQKNVATSEDSDLSMRTLSTPS. The 47-residue stretch at 111–157 folds into the F-box domain; sequence QASIDRLPDHSMVQIFSFLPTNQLCRCARVCRRWYNLAWDPRLWRTI. LRR repeat units follow at residues 170–195, 196–221, 222–247, 253–281, 282–307, 308–333, 334–359, 360–385, 386–411, 412–437, and 438–463; these read LKVL…TVSG, CRRL…EVSG, CYNI…DVSG, CISL…DMTD, CFVL…YLRR, CVRL…SVSD, CRFV…SIAH, CGRV…NARG, CEGI…DIGK, CPLV…SLKS, and CESI…NVQD.

This sequence belongs to the FBXL7 family. In terms of assembly, part of the SCF (SKP1-CUL1-F-box) E3 ubiquitin-protein ligase complex SCF(FBXL7) composed of CUL1, SKP1, RBX1 and FBXL7. Interacts with AURKA; interaction takes place during mitosis but not in interphase. Interacts with BIRC5; this interaction allows BIRC5 to be polyubiquitinated by the SCF(FBXL7) E3 ubiquitin-protein ligase complex.

Its subcellular location is the cytoplasm. It localises to the cytoskeleton. It is found in the microtubule organizing center. The protein resides in the centrosome. The protein operates within protein modification; protein ubiquitination. Its function is as follows. Substrate recognition component of a SCF (SKP1-CUL1-F-box protein) E3 ubiquitin-protein ligase complex. During mitosis, it mediates the ubiquitination and subsequent proteasomal degradation of AURKA, causing mitotic arrest. It also regulates mitochondrial function by mediating the ubiquitination and proteasomal degradation of the apoptosis inhibitor BIRC5. The chain is F-box/LRR-repeat protein 7 (FBXL7) from Homo sapiens (Human).